Reading from the N-terminus, the 254-residue chain is MTQAFTVVIPARYASTRLPGKPLQDIAGQPMIQRVWNQARKSAASRVVIATDDERILAACQGFGAEVLLTRADHNSGTDRLEEVASRLGLAADAIVVNVQGDEPLIPPALIDQVAANLAAHPESAIATLAEPIHDVAALFNPNVVKVATDVNGLALTFSRAPLPWARDAFAGDRDSLPDGVPYRRHIGIYAYRVGFLADFVAWGPCWLENTESLEQLRALWHGVRIHVADARETMLPGVDTPEDLERVRRVLGG.

This sequence belongs to the KdsB family.

Its subcellular location is the cytoplasm. The enzyme catalyses 3-deoxy-alpha-D-manno-oct-2-ulosonate + CTP = CMP-3-deoxy-beta-D-manno-octulosonate + diphosphate. It functions in the pathway nucleotide-sugar biosynthesis; CMP-3-deoxy-D-manno-octulosonate biosynthesis; CMP-3-deoxy-D-manno-octulosonate from 3-deoxy-D-manno-octulosonate and CTP: step 1/1. The protein operates within bacterial outer membrane biogenesis; lipopolysaccharide biosynthesis. Its function is as follows. Activates KDO (a required 8-carbon sugar) for incorporation into bacterial lipopolysaccharide in Gram-negative bacteria. This is 3-deoxy-manno-octulosonate cytidylyltransferase from Pseudomonas paraeruginosa (strain DSM 24068 / PA7) (Pseudomonas aeruginosa (strain PA7)).